The primary structure comprises 328 residues: D-cysteine desulfhydrase (328 aa).

Position 51 is an N6-(pyridoxal phosphate)lysine (Lys51).

It belongs to the ACC deaminase/D-cysteine desulfhydrase family. Homodimer. Requires pyridoxal 5'-phosphate as cofactor.

It carries out the reaction D-cysteine + H2O = hydrogen sulfide + pyruvate + NH4(+) + H(+). In terms of biological role, catalyzes the alpha,beta-elimination reaction of D-cysteine and of several D-cysteine derivatives. It could be a defense mechanism against D-cysteine. In Salmonella typhi, this protein is D-cysteine desulfhydrase.